The following is a 248-amino-acid chain: Ribonuclease PH (248 aa).

Phosphate contacts are provided by residues Arg-93 and 131–133; that span reads GTR.

The protein belongs to the RNase PH family. As to quaternary structure, homohexameric ring arranged as a trimer of dimers.

The enzyme catalyses tRNA(n+1) + phosphate = tRNA(n) + a ribonucleoside 5'-diphosphate. In terms of biological role, phosphorolytic 3'-5' exoribonuclease that plays an important role in tRNA 3'-end maturation. Removes nucleotide residues following the 3'-CCA terminus of tRNAs; can also add nucleotides to the ends of RNA molecules by using nucleoside diphosphates as substrates, but this may not be physiologically important. Probably plays a role in initiation of 16S rRNA degradation (leading to ribosome degradation) during starvation. This Bifidobacterium longum (strain NCC 2705) protein is Ribonuclease PH.